Reading from the N-terminus, the 362-residue chain is tRNA-specific 2-thiouridylase MnmA 1 (362 aa).

ATP is bound by residues 12–19 and Met-38; that span reads GMSGGVDS. Cys-104 serves as the catalytic Nucleophile. Cys-104 and Cys-200 are oxidised to a cystine. Residue Gly-128 coordinates ATP. Residues 150–152 form an interaction with tRNA region; the sequence is KDQ. Cys-200 functions as the Cysteine persulfide intermediate in the catalytic mechanism. The interaction with tRNA stretch occupies residues 306-307; sequence RY.

The protein belongs to the MnmA/TRMU family.

It localises to the cytoplasm. It carries out the reaction S-sulfanyl-L-cysteinyl-[protein] + uridine(34) in tRNA + AH2 + ATP = 2-thiouridine(34) in tRNA + L-cysteinyl-[protein] + A + AMP + diphosphate + H(+). Functionally, catalyzes the 2-thiolation of uridine at the wobble position (U34) of tRNA, leading to the formation of s(2)U34. This Clostridium tetani (strain Massachusetts / E88) protein is tRNA-specific 2-thiouridylase MnmA 1.